The primary structure comprises 492 residues: UPF0652 protein C22H10.08 (492 aa).

The protein belongs to the UPF0652 family.

The protein localises to the cytoplasm. It is found in the nucleus. The polypeptide is UPF0652 protein C22H10.08 (Schizosaccharomyces pombe (strain 972 / ATCC 24843) (Fission yeast)).